We begin with the raw amino-acid sequence, 573 residues long: Phosphoenolpyruvate-protein phosphotransferase (573 aa).

Residue His-190 is the Tele-phosphohistidine intermediate of the active site. Phosphoenolpyruvate is bound by residues Arg-297 and Arg-334. Positions 433 and 457 each coordinate Mg(2+). Residues 456–457 and Arg-467 contribute to the phosphoenolpyruvate site; that span reads ND. The active-site Proton donor is the Cys-504.

It belongs to the PEP-utilizing enzyme family. In terms of assembly, homodimer. Mg(2+) is required as a cofactor.

It localises to the cytoplasm. The catalysed reaction is L-histidyl-[protein] + phosphoenolpyruvate = N(pros)-phospho-L-histidyl-[protein] + pyruvate. In terms of biological role, general (non sugar-specific) component of the phosphoenolpyruvate-dependent sugar phosphotransferase system (sugar PTS). This major carbohydrate active-transport system catalyzes the phosphorylation of incoming sugar substrates concomitantly with their translocation across the cell membrane. Enzyme I transfers the phosphoryl group from phosphoenolpyruvate (PEP) to the phosphoryl carrier protein (HPr). The polypeptide is Phosphoenolpyruvate-protein phosphotransferase (ptsI) (Borreliella burgdorferi (strain ATCC 35210 / DSM 4680 / CIP 102532 / B31) (Borrelia burgdorferi)).